The primary structure comprises 308 residues: Porphobilinogen deaminase (308 aa).

Cys-241 is modified (S-(dipyrrolylmethanemethyl)cysteine).

Belongs to the HMBS family. As to quaternary structure, monomer. Dipyrromethane is required as a cofactor.

It catalyses the reaction 4 porphobilinogen + H2O = hydroxymethylbilane + 4 NH4(+). It functions in the pathway porphyrin-containing compound metabolism; protoporphyrin-IX biosynthesis; coproporphyrinogen-III from 5-aminolevulinate: step 2/4. Functionally, tetrapolymerization of the monopyrrole PBG into the hydroxymethylbilane pre-uroporphyrinogen in several discrete steps. The protein is Porphobilinogen deaminase of Staphylococcus aureus (strain MRSA252).